Here is a 664-residue protein sequence, read N- to C-terminus: Probable urea active transporter 1 (664 aa).

16 helical membrane passes run 9–29 (SVGYGIVVGLGLGFAALMIFV), 56–76 (GLVASAVVSSWTWASTLLTSA), 86–106 (GAFWYASGACVQILLFTVLAI), 132–152 (GVFLVFAYITNILVMAMLLCG), 165–185 (TVAVCFLLPVGVIIYTMFGGI), 189–209 (FLTDYIHTVIILVILIMFSLA), 252–272 (GAIFFIINLAGNFGTVFVDNG), 290–310 (ILGGLAWFAIPWLAATTMGLV), 327–347 (MSDLEVSEGLVLPYAAIALMG), 353–373 (ATLLLVFMAVTSAASAELIAV), 395–415 (LLYTGHASLIVFGFAMSGFAT), 428–448 (YLLMGVLVCPAVVPATCVMLF), 454–474 (IAVTVSPVLGIISSIITWLVV), 496–516 (AGNVVGLLSPALYILILSIIF), 555–575 (VAALIITAAFIILWPWPMYGT), and 587–607 (WVVVGLIWIFFTVFAVGIFPL).

Belongs to the sodium:solute symporter (SSF) (TC 2.A.21) family.

Its subcellular location is the membrane. Involved in active transport of urea. This is Probable urea active transporter 1 (dur3-1) from Schizosaccharomyces pombe (strain 972 / ATCC 24843) (Fission yeast).